Reading from the N-terminus, the 168-residue chain is Phosphopantetheine adenylyltransferase (168 aa).

Residue T10 participates in substrate binding. Residues 10-11 and H18 each bind ATP; that span reads TF. Residues K42, L75, and R89 each coordinate substrate. Residues 90–92, E100, and 125–131 contribute to the ATP site; these read GVR and YTYVASS.

This sequence belongs to the bacterial CoaD family. As to quaternary structure, homohexamer. The cofactor is Mg(2+).

Its subcellular location is the cytoplasm. It catalyses the reaction (R)-4'-phosphopantetheine + ATP + H(+) = 3'-dephospho-CoA + diphosphate. The protein operates within cofactor biosynthesis; coenzyme A biosynthesis; CoA from (R)-pantothenate: step 4/5. In terms of biological role, reversibly transfers an adenylyl group from ATP to 4'-phosphopantetheine, yielding dephospho-CoA (dPCoA) and pyrophosphate. The protein is Phosphopantetheine adenylyltransferase of Prosthecochloris aestuarii (strain DSM 271 / SK 413).